Here is a 145-residue protein sequence, read N- to C-terminus: D-aminoacyl-tRNA deacylase (145 aa).

Positions glycine 137–proline 138 match the Gly-cisPro motif, important for rejection of L-amino acids motif.

The protein belongs to the DTD family. As to quaternary structure, homodimer.

The protein localises to the cytoplasm. It carries out the reaction glycyl-tRNA(Ala) + H2O = tRNA(Ala) + glycine + H(+). The catalysed reaction is a D-aminoacyl-tRNA + H2O = a tRNA + a D-alpha-amino acid + H(+). Functionally, an aminoacyl-tRNA editing enzyme that deacylates mischarged D-aminoacyl-tRNAs. Also deacylates mischarged glycyl-tRNA(Ala), protecting cells against glycine mischarging by AlaRS. Acts via tRNA-based rather than protein-based catalysis; rejects L-amino acids rather than detecting D-amino acids in the active site. By recycling D-aminoacyl-tRNA to D-amino acids and free tRNA molecules, this enzyme counteracts the toxicity associated with the formation of D-aminoacyl-tRNA entities in vivo and helps enforce protein L-homochirality. This is D-aminoacyl-tRNA deacylase from Klebsiella pneumoniae (strain 342).